The chain runs to 881 residues: MTELHPDLRENVRLLGDLLGQSILRFPGQDCYDRIEEIRAAAKADRRQESGSGQRLVKLLGQLSDDELLPVTRAFNQFLNLANLAEQYHGIRRKQGHPSDLMVESLGEVFDRLKSGGIDPQELHRKVADLRIEFVLTAHPTEVARRTLILKYDEMSDCLSRLDHDDLMPGEREEIVDRLSLLIAEAWHTDEIRHERPTAVDEAKWGFAVIENSLWQALPKFLRSLDTSLSEATGQGLPLQVSPIRIASWMGGDRDGNPNVTHEVTREVFLLGRWMAADLYLRDIQALRAELSMWQASDELRAEVGDSREPYRQVLAQLRERLIKTREWAEASVKGEPADDSGILFENEDLTGPLELCYRSLMECGLETIANGPLLDTIRRAHTFGLPLIRLDIRQEASRHAEAVAEMVNYLGLGDYLSWSEQERQAFLVKELKGRRPLVPRNWQPSEPVREVLATCEVVAGQTPEALGSYVISMASKPSDVLNVILLLREAGMAFPMRVVPLFETLDDLKGAPDSMAALYEVDWYREYCSGRQEVMIGYSDSSKDAGQLMAAWAQYQAQEKLTEVANRYGVHLTLFHGRGGTVGRGGGPANRAILSQPPGSVNGSFRITEQGEMIRFKFGLPRLAVQSLTLYTTAVIEATLAPPPVPKDEWREVMDWLTERSLRSYREVVRENPDFVPYFRQVTPETALGKLALGSRPARRKATGGVESLRAIPWIFAWTQMRLMLPSWLGSDVALEQAAQADRLPELREMMQGWPFFRTYVDMLEMVLAKADLRIASYYEQTLVEDEHLLALGQSLRQRLQGCIERLLELKQQQTLLEQEPVFAHSMKVRNPYTDPLHYLQAELLRRDRESEGAGKVPELVERALKVTMAGISAGMRNTG.

Catalysis depends on residues histidine 139 and lysine 544.

Belongs to the PEPCase type 1 family. Requires Mg(2+) as cofactor.

It carries out the reaction oxaloacetate + phosphate = phosphoenolpyruvate + hydrogencarbonate. Functionally, forms oxaloacetate, a four-carbon dicarboxylic acid source for the tricarboxylic acid cycle. The polypeptide is Phosphoenolpyruvate carboxylase (Marinobacter nauticus (strain ATCC 700491 / DSM 11845 / VT8) (Marinobacter aquaeolei)).